Consider the following 226-residue polypeptide: Large ribosomal subunit protein uL4 (226 aa).

The tract at residues 47-74 (GTAKAKTRSEVSGGGRKPWPQKHTGRAR) is disordered.

Belongs to the universal ribosomal protein uL4 family. As to quaternary structure, part of the 50S ribosomal subunit.

Its function is as follows. One of the primary rRNA binding proteins, this protein initially binds near the 5'-end of the 23S rRNA. It is important during the early stages of 50S assembly. It makes multiple contacts with different domains of the 23S rRNA in the assembled 50S subunit and ribosome. Forms part of the polypeptide exit tunnel. This chain is Large ribosomal subunit protein uL4, found in Kosmotoga olearia (strain ATCC BAA-1733 / DSM 21960 / TBF 19.5.1).